The chain runs to 458 residues: Argininosuccinate lyase (458 aa).

The protein belongs to the lyase 1 family. Argininosuccinate lyase subfamily.

The protein localises to the cytoplasm. The catalysed reaction is 2-(N(omega)-L-arginino)succinate = fumarate + L-arginine. It functions in the pathway amino-acid biosynthesis; L-arginine biosynthesis; L-arginine from L-ornithine and carbamoyl phosphate: step 3/3. This Heliobacterium mobile (Heliobacillus mobilis) protein is Argininosuccinate lyase.